Consider the following 253-residue polypeptide: Ubiquinone/menaquinone biosynthesis C-methyltransferase UbiE (253 aa).

S-adenosyl-L-methionine is bound by residues Thr-76, Asp-97, and 125–126; that span reads NA.

This sequence belongs to the class I-like SAM-binding methyltransferase superfamily. MenG/UbiE family.

The catalysed reaction is a 2-demethylmenaquinol + S-adenosyl-L-methionine = a menaquinol + S-adenosyl-L-homocysteine + H(+). The enzyme catalyses a 2-methoxy-6-(all-trans-polyprenyl)benzene-1,4-diol + S-adenosyl-L-methionine = a 5-methoxy-2-methyl-3-(all-trans-polyprenyl)benzene-1,4-diol + S-adenosyl-L-homocysteine + H(+). It functions in the pathway quinol/quinone metabolism; menaquinone biosynthesis; menaquinol from 1,4-dihydroxy-2-naphthoate: step 2/2. It participates in cofactor biosynthesis; ubiquinone biosynthesis. Functionally, methyltransferase required for the conversion of demethylmenaquinol (DMKH2) to menaquinol (MKH2) and the conversion of 2-polyprenyl-6-methoxy-1,4-benzoquinol (DDMQH2) to 2-polyprenyl-3-methyl-6-methoxy-1,4-benzoquinol (DMQH2). The sequence is that of Ubiquinone/menaquinone biosynthesis C-methyltransferase UbiE from Nitrobacter hamburgensis (strain DSM 10229 / NCIMB 13809 / X14).